Here is a 285-residue protein sequence, read N- to C-terminus: Foldase protein PrsA 2 (285 aa).

The N-terminal stretch at 1–20 (MRGKHIFIITALISILMLAA) is a signal peptide. The N-palmitoyl cysteine moiety is linked to residue Cys21. Residue Cys21 is the site of S-diacylglycerol cysteine attachment. The region spanning 134–224 (KPEIKASHIL…NGYHIIKLTG (91 aa)) is the PpiC domain.

Belongs to the PrsA family.

The protein localises to the cell membrane. It catalyses the reaction [protein]-peptidylproline (omega=180) = [protein]-peptidylproline (omega=0). Its function is as follows. Plays a major role in protein secretion by helping the post-translocational extracellular folding of several secreted proteins. Important for the secretion of the protective antigen. The three PsrA proteins in this organism show different but overlapping substrate specificities. The sequence is that of Foldase protein PrsA 2 (prsA2) from Bacillus anthracis.